Here is a 141-residue protein sequence, read N- to C-terminus: Large ribosomal subunit protein uL16 (141 aa).

The protein belongs to the universal ribosomal protein uL16 family. As to quaternary structure, part of the 50S ribosomal subunit.

In terms of biological role, binds 23S rRNA and is also seen to make contacts with the A and possibly P site tRNAs. The sequence is that of Large ribosomal subunit protein uL16 from Aliarcobacter butzleri (strain RM4018) (Arcobacter butzleri).